The following is a 251-amino-acid chain: Intermembrane phospholipid transport system lipoprotein MlaA (251 aa).

The N-terminal stretch at M1 to G17 is a signal peptide. Residue C18 is the site of N-palmitoyl cysteine attachment. C18 carries S-diacylglycerol cysteine lipidation. The interval G228 to E251 is disordered.

The protein belongs to the MlaA family.

It is found in the cell outer membrane. In terms of biological role, involved in a phospholipid transport pathway that maintains lipid asymmetry in the outer membrane by retrograde trafficking of phospholipids from the outer membrane to the inner membrane. Required for intercellular spreading of S.flexneri. This is Intermembrane phospholipid transport system lipoprotein MlaA from Shigella flexneri.